The primary structure comprises 403 residues: Pyruvate, phosphate dikinase regulatory protein 1, chloroplastic (403 aa).

The N-terminal 86 residues, 1–86, are a transit peptide targeting the chloroplast; sequence MALLSAMKLQ…NTTGPMRPIE (86 aa). The tract at residues 1–108 is disordered; that stretch reads MALLSAMKLQ…DVSSSSNGVS (108 aa). Composition is skewed to low complexity over residues 17-26, 69-80, and 87-108; these read SSNLNPNSKP, STITNGSNNTTG, and SSSR…NGVS. 269–276 provides a ligand contact to ADP; sequence GVSRTGKT.

This sequence belongs to the pyruvate, phosphate/water dikinase regulatory protein family. PDRP subfamily. As to quaternary structure, interacts with PPDK1. As to expression, expressed in green tissues.

The protein localises to the plastid. It localises to the chloroplast stroma. It catalyses the reaction N(tele)-phospho-L-histidyl/L-threonyl-[pyruvate, phosphate dikinase] + ADP = N(tele)-phospho-L-histidyl/O-phospho-L-threonyl-[pyruvate, phosphate dikinase] + AMP + H(+). The catalysed reaction is N(tele)-phospho-L-histidyl/O-phospho-L-threonyl-[pyruvate, phosphate dikinase] + phosphate + H(+) = N(tele)-phospho-L-histidyl/L-threonyl-[pyruvate, phosphate dikinase] + diphosphate. Its activity is regulated as follows. Regulated by light/dark exposure. In terms of biological role, bifunctional serine/threonine kinase and phosphorylase involved in the dark/light-mediated regulation of PPDK by catalyzing its phosphorylation/dephosphorylation. Dark/light-induced changes in stromal concentrations of the competing ADP and Pi substrates govern the direction of the reaction. In the dark, phosphorylates the catalytic intermediate of PPDK (PPDK-HisP), inactivating it. Light exposure induces the phosphorolysis reaction that reactivates PPDK. Unlike the kinase function which can utilize either Thr or Ser as target, the phosphorylase function has a strict substrate requirement for threonyl phosphate. The polypeptide is Pyruvate, phosphate dikinase regulatory protein 1, chloroplastic (RP1) (Arabidopsis thaliana (Mouse-ear cress)).